Consider the following 445-residue polypeptide: Cytochrome b (445 aa).

The Cytoplasmic segment spans residues 2 to 49; it reads SGIPHDHYEPRTGIEKWLHSRLPIVALAYDTIMIPTPRNLNWMWIWGV. The chain crosses the membrane as a helical span at residues 50-67; it reads VLAFCLVLQIVTGIVLAM. Residues 68–94 lie on the Periplasmic side of the membrane; sequence HYTPHVDLAFASVEHIMRNVNGGFMLR. A helical membrane pass occupies residues 95–113; that stretch reads YLHANGASLFFIAVYLHIF. The heme b site is built by His97 and His111. Residues 114-129 lie on the Cytoplasmic side of the membrane; it reads RGLYYGSYKAPREVTW. The helical transmembrane segment at 130–149 threads the bilayer; that stretch reads IVGMLIYLAMMATAFMGYVL. Topologically, residues 150-193 are periplasmic; it reads PWGQMSFWGATVITGLFGAIPGIGHSIQTWLLGGPAVDNATLNR. The helical transmembrane segment at 194 to 216 threads the bilayer; it reads FFSLHYLLPFVIAALVAIHIWAF. Heme b-binding residues include His198 and His212. Over 217-252 the chain is Cytoplasmic; that stretch reads HSTGNNNPTGVEVRRTSKAEAQKDTVPFWPYFIIKD. Residues 253–270 traverse the membrane as a helical segment; the sequence is VFALAVVLLVFFAIVGFM. Residues 271–329 lie on the Periplasmic side of the membrane; it reads PNYLGHPDNYIEANPLSTPAHIVPEWYFLPFYAILRAFTADVWVVQIANFISFGIIDAK. A helical transmembrane segment spans residues 330–346; sequence FFGVLAMFGAILVMALV. Topologically, residues 347-364 are cytoplasmic; it reads PWLDTSPVRSGRYRPMFK. Residues 365 to 382 traverse the membrane as a helical segment; it reads IYFWLLAADFVILTWVGA. Residues 383 to 388 are Periplasmic-facing; the sequence is QQTTFP. The helical transmembrane segment at 389 to 408 threads the bilayer; sequence YDWISLIASAYWFAYFLVIL. The Cytoplasmic segment spans residues 409–445; sequence PILGAIEKPVAPPATIEEDFNAHYSPATGGTKTVVAE.

The protein belongs to the cytochrome b family. The main subunits of complex b-c1 are: cytochrome b, cytochrome c1 and the Rieske protein. Requires heme b as cofactor.

Its subcellular location is the cell membrane. Functionally, component of the ubiquinol-cytochrome c reductase complex (complex III or cytochrome b-c1 complex), which is a respiratory chain that generates an electrochemical potential coupled to ATP synthesis. In Cereibacter sphaeroides (Rhodobacter sphaeroides), this protein is Cytochrome b (petB).